The primary structure comprises 1166 residues: DNA-directed RNA polymerase subunit beta (1166 aa).

This sequence belongs to the RNA polymerase beta chain family. As to quaternary structure, the RNAP catalytic core consists of 2 alpha, 1 beta, 1 beta' and 1 omega subunit. When a sigma factor is associated with the core the holoenzyme is formed, which can initiate transcription.

It carries out the reaction RNA(n) + a ribonucleoside 5'-triphosphate = RNA(n+1) + diphosphate. Functionally, DNA-dependent RNA polymerase catalyzes the transcription of DNA into RNA using the four ribonucleoside triphosphates as substrates. In Nocardioides sp. (strain ATCC BAA-499 / JS614), this protein is DNA-directed RNA polymerase subunit beta.